The following is a 506-amino-acid chain: 2-isopropylmalate synthase (506 aa).

A Pyruvate carboxyltransferase domain is found at Ile-4–Lys-266. Mn(2+)-binding residues include Asp-13, His-201, His-203, and Asn-237. The segment at Asn-390 to Lys-506 is regulatory domain.

The protein belongs to the alpha-IPM synthase/homocitrate synthase family. LeuA type 1 subfamily. In terms of assembly, homodimer. Mn(2+) is required as a cofactor.

It localises to the cytoplasm. It catalyses the reaction 3-methyl-2-oxobutanoate + acetyl-CoA + H2O = (2S)-2-isopropylmalate + CoA + H(+). Its pathway is amino-acid biosynthesis; L-leucine biosynthesis; L-leucine from 3-methyl-2-oxobutanoate: step 1/4. Functionally, catalyzes the condensation of the acetyl group of acetyl-CoA with 3-methyl-2-oxobutanoate (2-ketoisovalerate) to form 3-carboxy-3-hydroxy-4-methylpentanoate (2-isopropylmalate). This chain is 2-isopropylmalate synthase, found in Bacillus cereus (strain AH820).